Consider the following 344-residue polypeptide: Uroporphyrinogen decarboxylase (344 aa).

Residues 24–28 (RQAGR), phenylalanine 43, aspartate 74, tyrosine 151, serine 206, and histidine 323 contribute to the substrate site.

It belongs to the uroporphyrinogen decarboxylase family. As to quaternary structure, homodimer.

It is found in the cytoplasm. The enzyme catalyses uroporphyrinogen III + 4 H(+) = coproporphyrinogen III + 4 CO2. It participates in porphyrin-containing compound metabolism; protoporphyrin-IX biosynthesis; coproporphyrinogen-III from 5-aminolevulinate: step 4/4. Its function is as follows. Catalyzes the decarboxylation of four acetate groups of uroporphyrinogen-III to yield coproporphyrinogen-III. The protein is Uroporphyrinogen decarboxylase of Rhodobacter capsulatus (Rhodopseudomonas capsulata).